The chain runs to 1048 residues: Putative helicase/primase complex protein (1048 aa).

Positions 1025-1048 (STKEESSPTREETSSIKEKTFTET) are disordered.

This sequence belongs to the asfivirus F1055L family.

May be involved in DNA replication. This is Putative helicase/primase complex protein from African swine fever virus (isolate Pig/Kenya/KEN-50/1950) (ASFV).